The primary structure comprises 1709 residues: Sialoadhesin (1709 aa).

Residues 1–19 (MGFLPKLLLLASFFPAGQA) form the signal peptide. In terms of domain architecture, Ig-like V-type spans 20–136 (SWGVSSPQDV…DVKGTLVTVT (117 aa)). Topologically, residues 20–1641 (SWGVSSPQDV…ALHRLHQFQQ (1622 aa)) are extracellular. 4 cysteine pairs are disulfide-bonded: C36/C166, C41/C98, C160/C217, and C262/C305. Residues Y63, R116, and 122–126 (VNRWS) each bind N-acetylneuraminate. Ig-like C2-type domains follow at residues 139–233 (PRVP…IHLQ), 238–320 (PKGV…PPIS), 326–405 (AEVQ…GPVS), 411–507 (PPLT…LDFH), 511–593 (ARLL…AVLT), 601–705 (PTFT…ATFN), 708–785 (ATVL…AQLS), 799–894 (PKLS…FQVR), 898–977 (VQVS…APIS), 984–1083 (PRHV…ADFD), 1085–1165 (QAVN…RPIT), and 1176–1248 (RLTY…SPLG). N-linked (GlcNAc...) asparagine glycosylation is present at N159. N-linked (GlcNAc...) asparagine glycosylation is found at N265 and N339. Disulfide bonds link C346–C390 and C433–C491. A glycan (N-linked (GlcNAc...) asparagine) is linked at N499. 2 disulfides stabilise this stretch: C531–C575 and C624–C689. Residues N697, N726, N730, and N741 are each glycosylated (N-linked (GlcNAc...) asparagine). 2 disulfides stabilise this stretch: C729–C774 and C817–C876. A glycan (N-linked (GlcNAc...) asparagine) is linked at N886. Cystine bridges form between C916/C960 and C1005/C1067. N-linked (GlcNAc...) asparagine glycosylation is found at N1104 and N1138. Cystine bridges form between C1107-C1149 and C1193-C1241. N1251 carries N-linked (GlcNAc...) asparagine glycosylation. Ig-like C2-type domains follow at residues 1259–1341 (EGVR…AALQ), 1350–1442 (VLSS…RLQV), 1445–1528 (ARVV…VMLR), and 1536–1631 (PTMM…FGVR). 2 disulfides stabilise this stretch: C1281–C1324 and C1367–C1425. N-linked (GlcNAc...) asparagine glycosylation is found at N1462 and N1476. 2 cysteine pairs are disulfide-bonded: C1465/C1511 and C1554/C1613. A helical transmembrane segment spans residues 1642–1662 (LLWVLGLLVGLLLLLLGLGAC). The Cytoplasmic portion of the chain corresponds to 1663–1709 (YTWRRRRVCKQSMGENSVEMAFQKETTQLIDPDAATCETSTCAPPLG).

Belongs to the immunoglobulin superfamily. SIGLEC (sialic acid binding Ig-like lectin) family. In terms of assembly, interacts with TYROBP. Interacts with CLEC10A. Expressed by macrophages in various tissues. High levels are found in spleen, lymph node, perivascular macrophages in brain and lower levels in bone marrow, liver Kupffer cells and lamina propria of colon and lung. Also expressed by inflammatory macrophages in rheumatoid arthritis.

It localises to the cell membrane. It is found in the secreted. Functionally, macrophage-restricted adhesion molecule that mediates sialic-acid dependent binding to lymphocytes, including granulocytes, monocytes, natural killer cells, B-cells and CD8 T-cells. Plays a crucial role in limiting bacterial dissemination by engaging sialylated bacteria to promote effective phagocytosis and antigen presentation for the adaptive immune response. Mediates the uptake of various enveloped viruses via sialic acid recognition and subsequently induces the formation of intracellular compartments filled with virions (VCCs). In turn, enhances macrophage-to-T-cell transmission of several viruses including HIV-1 or SARS-CoV-2. Acts as an endocytic receptor mediating clathrin dependent endocytosis. Preferentially binds to alpha-2,3-linked sialic acid. Binds to SPN/CD43 on T-cells. May play a role in hemopoiesis. Plays a role in the inhibition of antiviral innate immune by promoting TBK1 degradation via TYROBP and TRIM27-mediated ubiquitination. Its function is as follows. (Microbial infection) Facilitates viral cytoplasmic entry into activated dendritic cells via recognition of sialylated gangliosides pesent on viral membrane. In Homo sapiens (Human), this protein is Sialoadhesin (SIGLEC1).